The following is a 353-amino-acid chain: Phosphate acyltransferase (353 aa).

The protein belongs to the PlsX family. As to quaternary structure, homodimer. Probably interacts with PlsY.

The protein localises to the cytoplasm. The catalysed reaction is a fatty acyl-[ACP] + phosphate = an acyl phosphate + holo-[ACP]. The protein operates within lipid metabolism; phospholipid metabolism. Its function is as follows. Catalyzes the reversible formation of acyl-phosphate (acyl-PO(4)) from acyl-[acyl-carrier-protein] (acyl-ACP). This enzyme utilizes acyl-ACP as fatty acyl donor, but not acyl-CoA. This Rhodopseudomonas palustris (strain BisB18) protein is Phosphate acyltransferase.